A 310-amino-acid polypeptide reads, in one-letter code: Proline dehydrogenase (310 aa).

Residue K98 coordinates substrate. Residue D135 is part of the active site. FAD is bound by residues M136, Q166, 187–192, 229–230, and 292–295; these read RMVKGA, TH, and RIAE. R187 is a catalytic residue. Substrate is bound at residue 291 to 292; it reads RR.

It belongs to the proline dehydrogenase family. FAD is required as a cofactor.

It catalyses the reaction L-proline + a quinone = (S)-1-pyrroline-5-carboxylate + a quinol + H(+). Its pathway is amino-acid degradation; L-proline degradation into L-glutamate; L-glutamate from L-proline: step 1/2. In terms of biological role, converts proline to delta-1-pyrroline-5-carboxylate. The chain is Proline dehydrogenase from Deinococcus radiodurans (strain ATCC 13939 / DSM 20539 / JCM 16871 / CCUG 27074 / LMG 4051 / NBRC 15346 / NCIMB 9279 / VKM B-1422 / R1).